We begin with the raw amino-acid sequence, 150 residues long: Ribosomal RNA large subunit methyltransferase H (150 aa).

S-adenosyl-L-methionine-binding positions include Ala-100 and 118–123 (LSEMTF).

It belongs to the RNA methyltransferase RlmH family. As to quaternary structure, homodimer.

The protein localises to the cytoplasm. The enzyme catalyses pseudouridine(1915) in 23S rRNA + S-adenosyl-L-methionine = N(3)-methylpseudouridine(1915) in 23S rRNA + S-adenosyl-L-homocysteine + H(+). Specifically methylates the pseudouridine at position 1915 (m3Psi1915) in 23S rRNA. The sequence is that of Ribosomal RNA large subunit methyltransferase H from Helicobacter pylori (strain HPAG1).